The primary structure comprises 312 residues: GATA transcription factor 6 (312 aa).

3 disordered regions span residues methionine 1 to leucine 33, glutamine 56 to aspartate 77, and lysine 136 to leucine 186. The segment covering glutamine 56–asparagine 71 has biased composition (basic and acidic residues). Residues valine 142–threonine 151 are compositionally biased toward basic residues. The Nuclear localization signal motif lies at lysine 143 to arginine 150. Positions serine 157–leucine 186 are enriched in low complexity. Residues glutamine 217–serine 271 form a GATA-type zinc finger.

The protein belongs to the type IV zinc-finger family. Class A subfamily.

The protein resides in the nucleus. In terms of biological role, transcriptional activator that specifically binds 5'-GATA-3' or 5'-GAT-3' motifs within gene promoters. May be involved in the regulation of some light-responsive genes. In Arabidopsis thaliana (Mouse-ear cress), this protein is GATA transcription factor 6 (GATA6).